An 892-amino-acid polypeptide reads, in one-letter code: Alpha-actinin-1 (892 aa).

N-acetylmethionine is present on Met1. Residues 1–247 are actin-binding; it reads MDHYDSQQTN…IMTYVSSFYH (247 aa). Position 6 is a phosphoserine (Ser6). Tyr12 carries the phosphotyrosine; by FAK1 modification. Calponin-homology (CH) domains are found at residues 31 to 135 and 144 to 250; these read KQQR…LRFA and TSAK…HAFS. N6-acetyllysine is present on residues Lys95 and Lys195. Spectrin repeat units follow at residues 274 to 384, 394 to 499, 509 to 620, and 630 to 733; these read QLME…WLLN, HLAE…ALER, QLYL…ALTE, and RLRK…EVEN. The interaction with DDN stretch occupies residues 274–733; the sequence is QLMEDYEKLA…IARTINEVEN (460 aa). Phosphoserine is present on Ser471. The residue at position 676 (Lys676) is an N6-acetyllysine. A Phosphoserine modification is found at Ser677. 2 consecutive EF-hand domains span residues 746–781 and 787–822; these read EQMN…LGYD and QGEA…ETAD. Asp759, Asp761, Ser763, Thr765, and Glu770 together coordinate Ca(2+). Residue Ser890 is modified to Phosphoserine.

Belongs to the alpha-actinin family. As to quaternary structure, homodimer; antiparallel. Interacts with MYOZ2, TTID and LPP. Interacts with DDN. Interacts with PSD. Interacts with MICALL2. Interacts with DNM2 and CTTN. Interacts with PDLIM1. Interacts with PDLIM2. Interacts with PDLIM4 (via PDZ domain). Interacts with IGSF8.

Its subcellular location is the cytoplasm. It is found in the cytoskeleton. It localises to the myofibril. The protein localises to the sarcomere. The protein resides in the z line. Its subcellular location is the cell membrane. It is found in the cell junction. It localises to the cell projection. The protein localises to the ruffle. Functionally, F-actin cross-linking protein which is thought to anchor actin to a variety of intracellular structures. Association with IGSF8 regulates the immune synapse formation and is required for efficient T-cell activation. The chain is Alpha-actinin-1 (ACTN1) from Homo sapiens (Human).